A 967-amino-acid polypeptide reads, in one-letter code: Vitamin B12-dependent ribonucleotide reductase (967 aa).

Positions 1 to 23 are disordered; the sequence is MTETASGPARSSRAKGTKAGKGL. Substrate contacts are provided by residues Ser-143, 159-160, Gly-188, 364-368, and 554-558; these read AC, NPCSE, and PTGTI. Cys-160 and Cys-377 are disulfide-bonded. Asn-364 functions as the Proton acceptor in the catalytic mechanism. Catalysis depends on Cys-366, which acts as the Cysteine radical intermediate. Residue Glu-368 is the Proton acceptor of the active site.

This sequence belongs to the ribonucleoside diphosphate reductase class-2 family. Requires adenosylcob(III)alamin as cofactor.

It carries out the reaction a 2'-deoxyribonucleoside 5'-diphosphate + [thioredoxin]-disulfide + H2O = a ribonucleoside 5'-diphosphate + [thioredoxin]-dithiol. Functionally, catalyzes the reduction of ribonucleotides to deoxyribonucleotides. May function to provide a pool of deoxyribonucleotide precursors for DNA repair during oxygen limitation and/or for immediate growth after restoration of oxygen. The polypeptide is Vitamin B12-dependent ribonucleotide reductase (nrdJ) (Streptomyces coelicolor (strain ATCC BAA-471 / A3(2) / M145)).